Here is a 354-residue protein sequence, read N- to C-terminus: Polyribonucleotide 5'-hydroxyl-kinase PF0112 (354 aa).

36-43 (GDVDTGKT) serves as a coordination point for ATP.

A divalent metal cation serves as cofactor.

It carries out the reaction a 5'-end dephospho-2'-deoxyribonucleoside-DNA + ATP = a 5'-end 5'-phospho-2'-deoxyribonucleoside-DNA + ADP + H(+). It catalyses the reaction a 5'-end dephospho-ribonucleoside-RNA + ATP = a 5'-end 5'-phospho-ribonucleoside-RNA + ADP + H(+). In terms of biological role, polynucleotide kinase that can phosphorylate the 5'-hydroxyl groups of both single-stranded RNA (ssRNA) and single-stranded DNA (ssDNA). Exhibits a strong preference for ssRNA. The protein is Polyribonucleotide 5'-hydroxyl-kinase PF0112 of Pyrococcus furiosus (strain ATCC 43587 / DSM 3638 / JCM 8422 / Vc1).